The chain runs to 163 residues: Adenosine 5'-monophosphoramidase HINT2 (163 aa).

The transit peptide at Met1 to Thr17 directs the protein to the mitochondrion. Residue Lys45 is modified to N6-succinyllysine. Residues Ile55–Gly163 enclose the HIT domain. Residues Ser63 and Asp80 each coordinate AMP. Position 119 is an N6-acetyllysine (Lys119). N6-acetyllysine; alternate is present on Lys128. Residue Lys128 is modified to N6-succinyllysine; alternate. Residue Asn136 coordinates AMP. Lys139 bears the N6-acetyllysine mark. AMP-binding positions include Ala142–Val145 and His149–His151. The short motif at His147–His151 is the Histidine triad motif element. The active-site Tele-AMP-histidine intermediate is the His149.

The protein belongs to the HINT family.

The protein resides in the mitochondrion. It catalyses the reaction adenosine 5'-phosphoramidate + H2O = AMP + NH4(+). Its function is as follows. Exhibits adenosine 5'-monophosphoramidase activity, hydrolyzing purine nucleotide phosphoramidates with a single phosphate group such as adenosine 5'monophosphoramidate (AMP-NH2) to yield AMP and NH2. Hydrolyzes adenosine 5'-O-p-nitrophenylphosphoramidate (AMP-pNA). May be involved in steroid biosynthesis. May play a role in apoptosis. The protein is Adenosine 5'-monophosphoramidase HINT2 of Mus musculus (Mouse).